The primary structure comprises 429 residues: Adenylosuccinate synthetase (429 aa).

Residues 12–18 (GDEGKGK) and 40–42 (GHT) contribute to the GTP site. The Proton acceptor role is filled by D13. Positions 13 and 40 each coordinate Mg(2+). Residues 13–16 (DEGK), 38–41 (NAGH), T128, R142, Q223, T238, and R302 each bind IMP. Residue H41 is the Proton donor of the active site. 298-304 (VNTGRKR) provides a ligand contact to substrate. Residues R304, 330–332 (KLD), and 412–414 (GVG) contribute to the GTP site.

It belongs to the adenylosuccinate synthetase family. As to quaternary structure, homodimer. Mg(2+) serves as cofactor.

It localises to the cytoplasm. The catalysed reaction is IMP + L-aspartate + GTP = N(6)-(1,2-dicarboxyethyl)-AMP + GDP + phosphate + 2 H(+). The protein operates within purine metabolism; AMP biosynthesis via de novo pathway; AMP from IMP: step 1/2. Functionally, plays an important role in the de novo pathway of purine nucleotide biosynthesis. Catalyzes the first committed step in the biosynthesis of AMP from IMP. This is Adenylosuccinate synthetase from Corynebacterium diphtheriae (strain ATCC 700971 / NCTC 13129 / Biotype gravis).